The sequence spans 340 residues: CRISPR-associated protein Cas7 (340 aa).

As to quaternary structure, component of the Cascade-like complex (Cascade I-B), composed of Cas5, Cas6, Cas7 and crRNA.

The protein resides in the cytoplasm. CRISPR (clustered regularly interspaced short palindromic repeat) is an adaptive immune system that provides protection against mobile genetic elements (viruses, transposable elements and conjugative plasmids). CRISPR clusters contain sequences complementary to antecedent mobile elements and target invading nucleic acids. CRISPR clusters are transcribed and processed into CRISPR RNA (crRNA). Plasmid targeted by CRISPR locus P1 transform wild-type cells very poorly. This protein helps process or stabilize pre-crRNA into individual crRNA units, in vivo Cas6 and Cas7 are also required for optimal crRNA processing and/or stability. This is CRISPR-associated protein Cas7 from Haloferax volcanii (strain ATCC 29605 / DSM 3757 / JCM 8879 / NBRC 14742 / NCIMB 2012 / VKM B-1768 / DS2) (Halobacterium volcanii).